Here is a 97-residue protein sequence, read N- to C-terminus: Small, acid-soluble spore protein gamma-type (97 aa).

Positions 1-42 (MAKQTNKTASGTSTQHVKQQNAQASKNNFGTEFGSETNVQEV) are enriched in polar residues. The tract at residues 1 to 97 (MAKQTNKTAS…KNQNSGKYQG (97 aa)) is disordered. Repeats lie at residues 23 to 56 (QASKNNFGTEFGSETNVQEVKQQNAQAAANKSQN) and 58 to 91 (QASKNNFGTEFASETSAQEVRQQNAQAQAKKNQN). The span at 43–63 (KQQNAQAAANKSQNAQASKNN) shows a compositional bias: low complexity. The span at 69 to 78 (ASETSAQEVR) shows a compositional bias: polar residues. Over residues 79–91 (QQNAQAQAKKNQN) the composition is skewed to low complexity.

This sequence belongs to the gamma-type SASP family.

SASP are proteins degraded in the first minutes of spore germination and provide amino acids for both new protein synthesis and metabolism. These proteins may be involved in dormant spore's high resistance to UV light. The chain is Small, acid-soluble spore protein gamma-type (sasP-B) from Priestia megaterium (Bacillus megaterium).